The chain runs to 223 residues: N-terminal Xaa-Pro-Lys N-methyltransferase 1 (223 aa).

Met-1 carries the post-translational modification N-acetylmethionine. At Thr-2 the chain carries N-acetylthreonine; in N-terminal Xaa-Pro-Lys N-methyltransferase 1, N-terminally processed. Residues Gly-69, Arg-74, 91–93 (DVT), 119–120 (LQ), and Gln-135 each bind S-adenosyl-L-methionine.

This sequence belongs to the methyltransferase superfamily. NTM1 family.

The protein localises to the nucleus. The catalysed reaction is N-terminal L-alanyl-L-prolyl-L-lysyl-[protein] + 3 S-adenosyl-L-methionine = N-terminal N,N,N-trimethyl-L-alanyl-L-prolyl-L-lysyl-[protein] + 3 S-adenosyl-L-homocysteine + 3 H(+). The enzyme catalyses N-terminal L-seryl-L-prolyl-L-lysyl-[protein] + 3 S-adenosyl-L-methionine = N-terminal N,N,N-trimethyl-L-seryl-L-prolyl-L-lysyl-[protein] + 3 S-adenosyl-L-homocysteine + 3 H(+). It carries out the reaction N-terminal L-prolyl-L-prolyl-L-lysyl-[protein] + 2 S-adenosyl-L-methionine = N-terminal N,N-dimethyl-L-prolyl-L-prolyl-L-lysyl-[protein] + 2 S-adenosyl-L-homocysteine + 2 H(+). Functionally, distributive alpha-N-methyltransferase that methylates the N-terminus of target proteins containing the N-terminal motif [Ala/Gly/Pro/Ser]-Pro-Lys when the initiator Met is cleaved. Specifically catalyzes mono-, di- or tri-methylation of the exposed alpha-amino group of the Ala, Gly or Ser residue in the [Ala/Gly/Ser]-Pro-Lys motif and mono- or di-methylation of Pro in the Pro-Pro-Lys motif. Some of the substrates may be primed by NTMT2-mediated monomethylation. Catalyzes the trimethylation of the N-terminal Gly in CENPA (after removal of Met-1). Responsible for the N-terminal methylation of KLHL31, MYL2, MYL3, RB1, RCC1, RPL23A and SET. Required during mitosis for normal bipolar spindle formation and chromosome segregation via its action on RCC1. This chain is N-terminal Xaa-Pro-Lys N-methyltransferase 1 (NTMT1), found in Ailuropoda melanoleuca (Giant panda).